The chain runs to 312 residues: Malate dehydrogenase (312 aa).

NAD(+) is bound by residues 7 to 13 (GAAGGIG) and D34. Substrate contacts are provided by R81 and R87. NAD(+) contacts are provided by residues N94 and 117-119 (ITN). Positions 119 and 153 each coordinate substrate. H177 acts as the Proton acceptor in catalysis. M227 contributes to the NAD(+) binding site.

The protein belongs to the LDH/MDH superfamily. MDH type 1 family. Homodimer.

The enzyme catalyses (S)-malate + NAD(+) = oxaloacetate + NADH + H(+). Functionally, catalyzes the reversible oxidation of malate to oxaloacetate. The polypeptide is Malate dehydrogenase (Shigella dysenteriae serotype 1 (strain Sd197)).